A 279-amino-acid polypeptide reads, in one-letter code: Alcohol dehydrogenase-related 31 kDa protein (279 aa).

11–34 (YVADCGGIALETSKVLMTKNIAKL) contributes to the NAD(+) binding site. Ser-139 is a substrate binding site. The active-site Proton acceptor is the Tyr-152.

The protein belongs to the short-chain dehydrogenases/reductases (SDR) family.

The polypeptide is Alcohol dehydrogenase-related 31 kDa protein (Adhr) (Drosophila madeirensis (Fruit fly)).